The sequence spans 409 residues: Rho-GTPase-activating protein BAG7 (409 aa).

Polar residues predominate over residues 1–26 (MFNMNLLSTPSSEEGSPQNRSSSMSS). A disordered region spans residues 1 to 32 (MFNMNLLSTPSSEEGSPQNRSSSMSSVEGKKD). The Rho-GAP domain maps to 50-257 (VSLEESLKVA…FLILHASDII (208 aa)). The tract at residues 362–409 (KLLGNVGNSSNTGIKDPTERVPRGEHKTKHKQRQSWLRRLTSPSRTQP) is disordered. Basic and acidic residues predominate over residues 377–386 (DPTERVPRGE).

In terms of assembly, interacts with RHO1.

In terms of biological role, acts in signal transduction. Activates RHO1. The protein is Rho-GTPase-activating protein BAG7 (BAG7) of Saccharomyces cerevisiae (strain ATCC 204508 / S288c) (Baker's yeast).